The sequence spans 297 residues: Nucleotide-binding protein Bphy_0322 (297 aa).

8–15 (GISGSGKS) provides a ligand contact to ATP. A GTP-binding site is contributed by 57–60 (DARS).

It belongs to the RapZ-like family.

In terms of biological role, displays ATPase and GTPase activities. The polypeptide is Nucleotide-binding protein Bphy_0322 (Paraburkholderia phymatum (strain DSM 17167 / CIP 108236 / LMG 21445 / STM815) (Burkholderia phymatum)).